We begin with the raw amino-acid sequence, 512 residues long: 2-isopropylmalate synthase (512 aa).

Positions I4–K266 constitute a Pyruvate carboxyltransferase domain. 4 residues coordinate Mn(2+): D13, H201, H203, and N237. Positions E390–K512 are regulatory domain.

Belongs to the alpha-IPM synthase/homocitrate synthase family. LeuA type 1 subfamily. Homodimer. It depends on Mn(2+) as a cofactor.

The protein localises to the cytoplasm. It carries out the reaction 3-methyl-2-oxobutanoate + acetyl-CoA + H2O = (2S)-2-isopropylmalate + CoA + H(+). It functions in the pathway amino-acid biosynthesis; L-leucine biosynthesis; L-leucine from 3-methyl-2-oxobutanoate: step 1/4. Catalyzes the condensation of the acetyl group of acetyl-CoA with 3-methyl-2-oxobutanoate (2-ketoisovalerate) to form 3-carboxy-3-hydroxy-4-methylpentanoate (2-isopropylmalate). In Listeria monocytogenes serotype 4b (strain CLIP80459), this protein is 2-isopropylmalate synthase.